A 76-amino-acid chain; its full sequence is MNKALFLCLVVLCAAVVFAAEDLQKAKHAPFKRAAPCFCSGKPGRGDLWILRGTCPGGYGYTSNCYKWPNICCYPH.

The N-terminal stretch at 1–19 (MNKALFLCLVVLCAAVVFA) is a signal peptide. The propeptide occupies 20 to 31 (AEDLQKAKHAPF). Intrachain disulfides connect Cys37–Cys72, Cys39–Cys65, and Cys55–Cys73.

Belongs to the sea anemone type 3 (BDS) potassium channel toxin family. In terms of tissue distribution, highly expressed in the ectodermal tissue from the distal and proximal tentacles, body wall, and oral disk.

Its subcellular location is the secreted. The protein resides in the nematocyst. Its function is as follows. Acts as a gating modifier on both Kv and Nav ion channels, and also acts on blood pressure. Voltage-dependently inhibits voltage-gated potassium channels Kv3 (Kv3.1/KCNC1, Kv3.2/KCNC2 and Kv3.4/KCNC4) and slows inactivation of the voltage-gated sodium channel Nav1.7/SCN9A. Inhibits all Kv3.1, Kv3.2 and Kv3.4 by about 50% when tested at a voltage of +40 mV (45%, 48% and 56%, respectively). May act by binding residues in voltage-sensing domains S3b and S4 of Kv3. On sodium channels, tests have been done on human Nav1.7/SCN9A (expressed in HEK293 cells) (EC(50)=3 nM) and rat SCG neurons that mostly carry Nav1.7 channels (EC(50)=300 nM). This toxin also reduces blood pressure. This Anemonia viridis (Snakelocks anemone) protein is Kappa-actitoxin-Avd4a.